We begin with the raw amino-acid sequence, 309 residues long: Olfactory receptor 5B2 (309 aa).

The Extracellular segment spans residues 1-23 (MENCTEVTKFILLGLTSVPELQI). An N-linked (GlcNAc...) asparagine glycan is attached at Asn3. The helical transmembrane segment at 24-47 (PLFILFTFIYLLTLCGNLGMMLLI) threads the bilayer. The Cytoplasmic portion of the chain corresponds to 48–55 (LMDSCLHT). The helical transmembrane segment at 56–77 (PMYFFLSNLSLVDFGYSSAVTP) threads the bilayer. Over 78-98 (KVMAGFLRGDKVISYNACAVQ) the chain is Extracellular. Cys95 and Cys187 form a disulfide bridge. A helical membrane pass occupies residues 99 to 118 (MFFFVALATVENYLLASMAY). The Cytoplasmic portion of the chain corresponds to 119–137 (DRYAAVCKPLHYTTTMTAS). Residues 138-156 (VGACLALGSYVCGFLNASF) traverse the membrane as a helical segment. The Extracellular portion of the chain corresponds to 157 to 193 (HIGGIFSLSFCKSNLVHHFFCDVPAVMALSCSDKHTS). The chain crosses the membrane as a helical span at residues 194 to 217 (EVILVFMSSFNIFFVLLVIFISYL). Residues 218–234 (FIFITILKMHSAKGHQK) lie on the Cytoplasmic side of the membrane. The helical transmembrane segment at 235 to 257 (ALSTCASHFTAVSVFYGTVIFIY) threads the bilayer. The Extracellular segment spans residues 258–270 (LQPSSSHSMDTDK). The chain crosses the membrane as a helical span at residues 271 to 290 (MASVFYAMIIPMLNPVVYSL). Residues 291–309 (RNREVQNAFKKVLRRQKFL) are Cytoplasmic-facing.

It belongs to the G-protein coupled receptor 1 family.

It localises to the cell membrane. Its function is as follows. Odorant receptor. The polypeptide is Olfactory receptor 5B2 (OR5B2) (Homo sapiens (Human)).